Reading from the N-terminus, the 46-residue chain is Protein krueppel (46 aa).

3 consecutive C2H2-type zinc fingers follow at residues 1 to 4 (MRLH), 10 to 32 (YQCL…LRVH), and 38 to 46 (YACEICPSR).

The protein belongs to the krueppel C2H2-type zinc-finger protein family.

It localises to the nucleus. Krueppel is a gap class segmentation protein. The polypeptide is Protein krueppel (Kr) (Pholcus phalangioides (Longbodied cellar spider)).